Reading from the N-terminus, the 241-residue chain is Triosephosphate isomerase (241 aa).

9 to 11 (NWK) is a substrate binding site. The active-site Electrophile is the H96. The Proton acceptor role is filled by E165. Substrate is bound by residues G171, S204, and 225–226 (GG).

It belongs to the triosephosphate isomerase family. In terms of assembly, homodimer.

Its subcellular location is the cytoplasm. The enzyme catalyses D-glyceraldehyde 3-phosphate = dihydroxyacetone phosphate. It functions in the pathway carbohydrate biosynthesis; gluconeogenesis. Its pathway is carbohydrate degradation; glycolysis; D-glyceraldehyde 3-phosphate from glycerone phosphate: step 1/1. Involved in the gluconeogenesis. Catalyzes stereospecifically the conversion of dihydroxyacetone phosphate (DHAP) to D-glyceraldehyde-3-phosphate (G3P). The polypeptide is Triosephosphate isomerase (Nostoc sp. (strain PCC 7120 / SAG 25.82 / UTEX 2576)).